The following is a 293-amino-acid chain: Sodium-type flagellar protein MotY (293 aa).

The signal sequence occupies residues 1 to 21; sequence MNKWLITSGVMLSLLSANSYA. The OmpA-like domain occupies 175–292; sequence YSFEDIAFTI…RVVISLGRTQ (118 aa).

The protein localises to the cell membrane. Its function is as follows. May play the role of a stator in the sodium flagellar motor, stabilizing the force-generating unit through direct interaction with the cell wall. This chain is Sodium-type flagellar protein MotY, found in Vibrio parahaemolyticus serotype O3:K6 (strain RIMD 2210633).